Reading from the N-terminus, the 225-residue chain is Probable GTP-binding protein EngB (225 aa).

Residues 40–224 (GPPEVAFAGR…RAAIVHAVTA (185 aa)) enclose the EngB-type G domain. Residues 48 to 55 (GRSNVGKS), 75 to 79 (GRTQE), 102 to 105 (DMPG), 169 to 172 (TKAD), and 203 to 205 (TSS) each bind GTP. Mg(2+) contacts are provided by S55 and T77.

Belongs to the TRAFAC class TrmE-Era-EngA-EngB-Septin-like GTPase superfamily. EngB GTPase family. Mg(2+) is required as a cofactor.

In terms of biological role, necessary for normal cell division and for the maintenance of normal septation. The protein is Probable GTP-binding protein EngB of Chelativorans sp. (strain BNC1).